A 239-amino-acid chain; its full sequence is MMKFIKKEQIKNLGPNSKLLKQYKSQLTNLTSEQLEIGVGLLLGDAYIRSRDNGKTNCIQFEWKNKAYIDHICLKFDEWVLSPPHKKMRINHLGNEVITWGAQTFKHEAFNELSKLFIINNKKHIINNLIEDYVTPKSLAYWFMDDGGKWDYNKGSMNKSIVLNTQCFTIDEVNSLINGLNTKFKLNCSMKFNKNKPIIYIPHNSYNIYYELISPYIITEMRYKLPSYEGTSKDYNKIH.

It belongs to the LAGLIDADG endonuclease family.

The protein resides in the mitochondrion. In terms of biological role, endonuclease involved in mitochondrial 21S rRNA gene intron homing. This Zygosaccharomyces bisporus protein is Probable intron-encoded endonuclease I-ZbiI.